Reading from the N-terminus, the 196-residue chain is Imidazole glycerol phosphate synthase subunit HisH (196 aa).

The region spanning 2-196 (KATLINYGVG…LRNFYSWVKR (195 aa)) is the Glutamine amidotransferase type-1 domain. C76 serves as the catalytic Nucleophile. Residues H175 and E177 contribute to the active site.

As to quaternary structure, heterodimer of HisH and HisF.

It localises to the cytoplasm. It carries out the reaction 5-[(5-phospho-1-deoxy-D-ribulos-1-ylimino)methylamino]-1-(5-phospho-beta-D-ribosyl)imidazole-4-carboxamide + L-glutamine = D-erythro-1-(imidazol-4-yl)glycerol 3-phosphate + 5-amino-1-(5-phospho-beta-D-ribosyl)imidazole-4-carboxamide + L-glutamate + H(+). The enzyme catalyses L-glutamine + H2O = L-glutamate + NH4(+). It functions in the pathway amino-acid biosynthesis; L-histidine biosynthesis; L-histidine from 5-phospho-alpha-D-ribose 1-diphosphate: step 5/9. Its function is as follows. IGPS catalyzes the conversion of PRFAR and glutamine to IGP, AICAR and glutamate. The HisH subunit catalyzes the hydrolysis of glutamine to glutamate and ammonia as part of the synthesis of IGP and AICAR. The resulting ammonia molecule is channeled to the active site of HisF. This is Imidazole glycerol phosphate synthase subunit HisH from Sulfurisphaera tokodaii (strain DSM 16993 / JCM 10545 / NBRC 100140 / 7) (Sulfolobus tokodaii).